Reading from the N-terminus, the 559-residue chain is Potassium-transporting ATPase potassium-binding subunit (559 aa).

The next 13 helical transmembrane spans lie at 5 to 25 (GFLL…PLGS), 27 to 47 (LARL…RILW), 63 to 83 (LLAL…LLFW), 132 to 152 (GLTV…FALI), 170 to 190 (LVRI…LFFI), 253 to 273 (LAQM…FGEA), 283 to 303 (LLWA…WAEV), 327 to 347 (FGVL…CGAV), 356 to 376 (ALGG…FGGV), 379 to 399 (GLYG…LMIG), 416 to 436 (MTAL…ALAM), 484 to 504 (LLAF…MAIA), and 524 to 544 (GALF…LTFI).

The protein belongs to the KdpA family. The system is composed of three essential subunits: KdpA, KdpB and KdpC.

It localises to the cell inner membrane. Functionally, part of the high-affinity ATP-driven potassium transport (or Kdp) system, which catalyzes the hydrolysis of ATP coupled with the electrogenic transport of potassium into the cytoplasm. This subunit binds the periplasmic potassium ions and delivers the ions to the membrane domain of KdpB through an intramembrane tunnel. In Salmonella choleraesuis (strain SC-B67), this protein is Potassium-transporting ATPase potassium-binding subunit.